We begin with the raw amino-acid sequence, 265 residues long: MTSTGPETSETPGATTQRHGFGIDVGGSGIKGGIVDLDTGQLIGDRIKLLTPQPATPLAVAKTIAEVVNGFGWRGPLGVTYPGVVTHGVVRTAANVDKSWIGTNARDTIGAELGGQQVTILNDADAAGLAETRYGAGKNSPGLVVLLTFGTGIGSAVIHNGTLIPNTEFGHLEVGGKEAEERAASSVKEKNDWTYPKWAKQVTRVLIAIENAIWPDLFIAGGGISRKADKWVPLLENRTPVVPAALQNTAGIVGAAMASVADTTH.

The segment covering 1-18 (MTSTGPETSETPGATTQR) has biased composition (polar residues). Residues 1–22 (MTSTGPETSETPGATTQRHGFG) form a disordered region. 24-29 (DVGGSG) provides a ligand contact to ATP.

It belongs to the ROK (NagC/XylR) family. Homodimer.

The catalysed reaction is [phosphate](n) + D-glucose = [phosphate](n-1) + D-glucose 6-phosphate + H(+). It carries out the reaction D-glucose + ATP = D-glucose 6-phosphate + ADP + H(+). Catalyzes the phosphorylation of glucose using polyphosphate or ATP as the phosphoryl donor. Polyphosphate, rather than ATP, seems to be the major phosphate donor for the enzyme in M.tuberculosis. In Mycobacterium tuberculosis (strain CDC 1551 / Oshkosh), this protein is Polyphosphate glucokinase (ppgK).